A 219-amino-acid chain; its full sequence is Poxin (219 aa).

The active-site Proton donor is the histidine 17. Catalysis depends on tyrosine 138, which acts as the Shared with catalytic histidine of dimeric partner. Lysine 142 serves as the catalytic Proton acceptor; shared with catalytic histidine of dimeric partner.

Belongs to the poxin family. As to quaternary structure, homodimer.

The catalysed reaction is 2',3'-cGAMP + H2O = Gp(2'-5')Ap(3') + H(+). Functionally, nuclease that is responsible for viral evasion of host cGAS-STING innate immunity. Cleaves 2',3'-cGAMP which is produced by host cGAS following recognition of cytosolic DNA and blocks the subsequent 2',3'-cGAMP-mediated activation of TMEM173/STING, which normally spreads to adjacent cells and activates the interferon and NF-kappa-B immune responses. This is Poxin (OPG188) from Homo sapiens (Human).